We begin with the raw amino-acid sequence, 114 residues long: Ribosome-binding factor A (114 aa).

It belongs to the RbfA family. In terms of assembly, monomer. Binds 30S ribosomal subunits, but not 50S ribosomal subunits or 70S ribosomes.

The protein localises to the cytoplasm. One of several proteins that assist in the late maturation steps of the functional core of the 30S ribosomal subunit. Associates with free 30S ribosomal subunits (but not with 30S subunits that are part of 70S ribosomes or polysomes). Required for efficient processing of 16S rRNA. May interact with the 5'-terminal helix region of 16S rRNA. In Listeria monocytogenes serotype 4b (strain F2365), this protein is Ribosome-binding factor A.